The following is a 427-amino-acid chain: GTPase Obg (427 aa).

The Obg domain maps to 1–158; it reads MFIDKAKIHL…LTVTLELKLI (158 aa). Residues 159-330 form the OBG-type G domain; that stretch reads ADVGLVGFPN…LLDYVSIKLK (172 aa). GTP is bound by residues 165-172, 190-194, 212-215, 282-285, and 311-313; these read GFPNVGKS, FTTLT, DIPG, NKTD, and SAA. Positions 172 and 192 each coordinate Mg(2+). The OCT domain maps to 347–427; the sequence is LYELKEKDTN…IYDVEFEYFH (81 aa).

It belongs to the TRAFAC class OBG-HflX-like GTPase superfamily. OBG GTPase family. In terms of assembly, monomer. It depends on Mg(2+) as a cofactor.

Its subcellular location is the cytoplasm. In terms of biological role, an essential GTPase which binds GTP, GDP and possibly (p)ppGpp with moderate affinity, with high nucleotide exchange rates and a fairly low GTP hydrolysis rate. Plays a role in control of the cell cycle, stress response, ribosome biogenesis and in those bacteria that undergo differentiation, in morphogenesis control. In Alkaliphilus metalliredigens (strain QYMF), this protein is GTPase Obg.